The following is a 488-amino-acid chain: BRAP2 RING ZnF UBP domain-containing protein 1 (488 aa).

An RING-type; degenerate zinc finger spans residues 174 to 214 (CPICLERLDPDTSGIVSTLCDHSFQCSCTSKWTYLSCQVCR). Residues 208–301 (LSCQVCRLCQ…GKSVEMSTSC (94 aa)) form a UBP-type; degenerate zinc finger. Zn(2+) contacts are provided by cysteine 225, cysteine 228, cysteine 237, cysteine 240, cysteine 245, histidine 252, histidine 256, and histidine 262. A coiled-coil region spans residues 370–418 (EQIVVNTMQELQNKIEKCEEEKSGITEVNTKLIKEQDTWRKKAKEIEER). The tract at residues 453–488 (MSSDTDGIREGTVLPVPISPEPVSSVRRQKKSNRRK) is disordered. Residues 465–478 (VLPVPISPEPVSSV) are compositionally biased toward low complexity. Over residues 479-488 (RRQKKSNRRK) the composition is skewed to basic residues.

In terms of assembly, component of the heteromeric E3 ligase complex made of BRIZ1 and BRIZ2. Forms heterooligomers with BRIZ2 via coiled-coil domains.

The enzyme catalyses S-ubiquitinyl-[E2 ubiquitin-conjugating enzyme]-L-cysteine + [acceptor protein]-L-lysine = [E2 ubiquitin-conjugating enzyme]-L-cysteine + N(6)-ubiquitinyl-[acceptor protein]-L-lysine.. The protein operates within protein modification; protein ubiquitination. Its function is as follows. RING-type ubiquitin E3 ligase required for seed germination and post-germination growth. The polypeptide is BRAP2 RING ZnF UBP domain-containing protein 1 (Arabidopsis thaliana (Mouse-ear cress)).